Consider the following 450-residue polypeptide: Probable glycine dehydrogenase (decarboxylating) subunit 1 (450 aa).

Belongs to the GcvP family. N-terminal subunit subfamily. The glycine cleavage system is composed of four proteins: P, T, L and H. In this organism, the P 'protein' is a heterodimer of two subunits.

The catalysed reaction is N(6)-[(R)-lipoyl]-L-lysyl-[glycine-cleavage complex H protein] + glycine + H(+) = N(6)-[(R)-S(8)-aminomethyldihydrolipoyl]-L-lysyl-[glycine-cleavage complex H protein] + CO2. Functionally, the glycine cleavage system catalyzes the degradation of glycine. The P protein binds the alpha-amino group of glycine through its pyridoxal phosphate cofactor; CO(2) is released and the remaining methylamine moiety is then transferred to the lipoamide cofactor of the H protein. The protein is Probable glycine dehydrogenase (decarboxylating) subunit 1 of Staphylococcus haemolyticus (strain JCSC1435).